The sequence spans 257 residues: Protein orai-2 (257 aa).

The next 4 helical transmembrane spans lie at T67–L84, L95–I115, L149–L169, and A199–I219.

The protein belongs to the Orai family.

The protein resides in the membrane. In terms of biological role, ca(2+) release-activated Ca(2+)-like (CRAC-like) channel subunit which mediates Ca(2+) influx and increase in Ca(2+)-selective current by synergy with the Ca(2+) sensor, STIM1. The protein is Protein orai-2 (ORAI2) of Gallus gallus (Chicken).